Here is a 340-residue protein sequence, read N- to C-terminus: tRNA N6-adenosine threonylcarbamoyltransferase (340 aa).

2 residues coordinate Fe cation: His113 and His117. Substrate-binding positions include 135 to 139, Asp169, Gly182, Asp186, and Asn274; that span reads LVSGG. Asp302 contributes to the Fe cation binding site.

Belongs to the KAE1 / TsaD family. It depends on Fe(2+) as a cofactor.

The protein resides in the cytoplasm. The enzyme catalyses L-threonylcarbamoyladenylate + adenosine(37) in tRNA = N(6)-L-threonylcarbamoyladenosine(37) in tRNA + AMP + H(+). In terms of biological role, required for the formation of a threonylcarbamoyl group on adenosine at position 37 (t(6)A37) in tRNAs that read codons beginning with adenine. Is involved in the transfer of the threonylcarbamoyl moiety of threonylcarbamoyl-AMP (TC-AMP) to the N6 group of A37, together with TsaE and TsaB. TsaD likely plays a direct catalytic role in this reaction. The polypeptide is tRNA N6-adenosine threonylcarbamoyltransferase (Mycobacterium sp. (strain KMS)).